Consider the following 222-residue polypeptide: Ras-related protein RABA4d (222 aa).

22–29 serves as a coordination point for GTP; the sequence is GDSAVGKT. The Effector region motif lies at 44–52; sequence SKATIGVEF. GTP contacts are provided by residues 70–74, 128–131, and 158–159; these read DTAGQ, NKCD, and SA. S-geranylgeranyl cysteine attachment occurs at residues Cys-218 and Cys-219.

It belongs to the small GTPase superfamily. Rab family. In terms of assembly, interacts with PI4KB1. Specifically expressed in pollen and localized to the tips of growing pollen tubes.

The protein localises to the cytoplasmic vesicle membrane. Intracellular vesicle trafficking and protein transport. Plays an important role in the regulation of pollen tube tip growth. This is Ras-related protein RABA4d (RABA4D) from Arabidopsis thaliana (Mouse-ear cress).